The sequence spans 409 residues: MDKLLERFLHYVSLDTQSKSGVRQVPSTEGQWKLLRLLKQQLEEMGLVNITLSEKGTLMATLPANVEGDIPAIGFISHVDTSPDFSGKNVNPQIVENYRGGDIALGIGDEVLSPVMFPVLHQLLGQTLITTDGKTLLGADDKAGVAEIMTALAVLKGNPIPHGEIKVAFTPDEEVGKGAKHFDVEAFGAQWAYTVDGGGVGELEFENFNAASVNIKIVGNNVHPGTAKGVMVNALSLAARIHAEVPADETPETTEGYEGFYHLASMKGTVDRAEMHYIIRDFDRKQFEARKRKMMEIAKKVGKGLHPDCYIELVIEDSYYNMREKVVEHPHILDIAQQAMRDCHITPEMKPIRGGTDGAQLSFMGLPCPNLFTGGYNYHGKHEFVTLEGMEKAVQVIVRIAELTAKRGQ.

His78 is a Zn(2+) binding site. Asp80 is an active-site residue. Residue Asp140 coordinates Zn(2+). The active-site Proton acceptor is Glu173. Glu174, Asp196, and His379 together coordinate Zn(2+).

It belongs to the peptidase M20B family. The cofactor is Zn(2+).

Its subcellular location is the cytoplasm. It catalyses the reaction Release of the N-terminal residue from a tripeptide.. Functionally, cleaves the N-terminal amino acid of tripeptides. The protein is Peptidase T of Salmonella enteritidis PT4 (strain P125109).